The following is a 434-amino-acid chain: Glutamate-1-semialdehyde 2,1-aminomutase 1 (434 aa).

Lys-270 carries the post-translational modification N6-(pyridoxal phosphate)lysine.

This sequence belongs to the class-III pyridoxal-phosphate-dependent aminotransferase family. HemL subfamily. Homodimer. The cofactor is pyridoxal 5'-phosphate.

The protein resides in the cytoplasm. It carries out the reaction (S)-4-amino-5-oxopentanoate = 5-aminolevulinate. Its pathway is porphyrin-containing compound metabolism; protoporphyrin-IX biosynthesis; 5-aminolevulinate from L-glutamyl-tRNA(Glu): step 2/2. The polypeptide is Glutamate-1-semialdehyde 2,1-aminomutase 1 (Bacillus thuringiensis subsp. konkukian (strain 97-27)).